We begin with the raw amino-acid sequence, 217 residues long: UPF0173 metal-dependent hydrolase MJ1163 (217 aa).

It belongs to the UPF0173 family.

This chain is UPF0173 metal-dependent hydrolase MJ1163, found in Methanocaldococcus jannaschii (strain ATCC 43067 / DSM 2661 / JAL-1 / JCM 10045 / NBRC 100440) (Methanococcus jannaschii).